The chain runs to 548 residues: Methyl-accepting chemotaxis protein HlyB (548 aa).

Residues 1-10 lie on the Cytoplasmic side of the membrane; the sequence is MIINKFSLKW. Residues 11 to 31 traverse the membrane as a helical segment; it reads MLAIAVAIPAIALLFVAFTSL. At 32–199 the chain is on the periplasmic side; sequence NTMSVMQAQS…SFEAGRTKQM (168 aa). The chain crosses the membrane as a helical span at residues 200-220; it reads VIIAAGLIISFITSLVIITNL. The 54-residue stretch at 218–271 folds into the HAMP domain; sequence TNLRSRVAYLKDRMSSAAANLSLRTRLELDGNDELCDIGKSFNAFIDKVHHSIE. Residues 221-548 are Cytoplasmic-facing; that stretch reads RSRVAYLKDR…LDKLVGSFEL (328 aa). Positions 276–512 constitute a Methyl-accepting transducer domain; that stretch reads NSKELATMAS…DINRNVEDIN (237 aa).

It belongs to the methyl-accepting chemotaxis (MCP) protein family.

It localises to the cell inner membrane. Functionally, chemotactic-signal transducers respond to changes in the concentration of attractants and repellents in the environment, transduce a signal from the outside to the inside of the cell, and facilitate sensory adaptation through the variation of the level of methylation. The chain is Methyl-accepting chemotaxis protein HlyB (hlyB) from Vibrio cholerae serotype O1 (strain ATCC 39315 / El Tor Inaba N16961).